Here is a 1166-residue protein sequence, read N- to C-terminus: ATP-dependent helicase/deoxyribonuclease subunit B (1166 aa).

Residues methionine 1 to arginine 290 enclose the UvrD-like helicase ATP-binding domain. An ATP-binding site is contributed by glycine 8–serine 15. The UvrD-like helicase C-terminal domain occupies leucine 283 to aspartate 588. [4Fe-4S] cluster-binding residues include cysteine 802, cysteine 1123, cysteine 1126, and cysteine 1132.

Belongs to the helicase family. AddB/RexB type 1 subfamily. Heterodimer of AddA and AddB. Mg(2+) is required as a cofactor. It depends on [4Fe-4S] cluster as a cofactor.

The heterodimer acts as both an ATP-dependent DNA helicase and an ATP-dependent, dual-direction single-stranded exonuclease. Recognizes the chi site generating a DNA molecule suitable for the initiation of homologous recombination. The AddB subunit has 5' -&gt; 3' nuclease activity but not helicase activity. This chain is ATP-dependent helicase/deoxyribonuclease subunit B, found in Oceanobacillus iheyensis (strain DSM 14371 / CIP 107618 / JCM 11309 / KCTC 3954 / HTE831).